An 896-amino-acid polypeptide reads, in one-letter code: Phosphatidate phosphatase LPIN2 (896 aa).

Positions 1–108 (MNYVGQLAGQ…LPAYLATSPI (108 aa)) are N-LIP. Ser106 is subject to Phosphoserine. The segment at 120-208 (TPLVKSGGDE…SSNASLKEEE (89 aa)) is disordered. The segment covering 152–162 (VKKKKRRRKKY) has biased composition (basic residues). The Nuclear localization signal motif lies at 153 to 158 (KKKKRR). Residues Ser174, Ser186, Ser187, Ser243, and Ser303 each carry the phosphoserine modification. Disordered stretches follow at residues 370 to 405 (AEAP…DIYL) and 420 to 459 (FPKS…TECL). The span at 387 to 396 (KKKGVHKRSQ) shows a compositional bias: basic residues. Over residues 426–448 (EPGSRQWPESDTLSGSQSPQSVG) the composition is skewed to polar residues. Position 566 is a phosphoserine (Ser566). Residues 569–579 (KQLPESKEGKS) are compositionally biased toward basic and acidic residues. Positions 569-636 (KQLPESKEGK…LSHGSTTSYK (68 aa)) are disordered. Residues 604 to 617 (SSSDEGSQELEESI) show a composition bias toward acidic residues. A C-LIP region spans residues 635–837 (YKKSLRLSSD…RIFTVNPKGE (203 aa)). The DXDXT motif motif lies at 689 to 693 (DIDGT). An LXXIL motif motif is present at residues 700–704 (LGQIL).

The protein belongs to the lipin family. The cofactor is Mg(2+). In terms of tissue distribution, expressed in liver, lung, kidney, placenta, spleen, thymus, lymph node, prostate, testes, small intestine, and colon.

The protein localises to the nucleus. Its subcellular location is the cytoplasm. It is found in the cytosol. It localises to the endoplasmic reticulum membrane. The catalysed reaction is a 1,2-diacyl-sn-glycero-3-phosphate + H2O = a 1,2-diacyl-sn-glycerol + phosphate. Inhibited by N-ethylmaleimide. Functionally, acts as a magnesium-dependent phosphatidate phosphatase enzyme which catalyzes the conversion of phosphatidic acid to diacylglycerol during triglyceride, phosphatidylcholine and phosphatidylethanolamine biosynthesis in the endoplasmic reticulum membrane. Plays important roles in controlling the metabolism of fatty acids at different levels. Also acts as a nuclear transcriptional coactivator for PPARGC1A to modulate lipid metabolism. This is Phosphatidate phosphatase LPIN2 from Homo sapiens (Human).